A 685-amino-acid polypeptide reads, in one-letter code: tRNA 5-methylaminomethyl-2-thiouridine biosynthesis bifunctional protein MnmC (685 aa).

The segment at 1 to 272 (MTAEPNKPCQ…MAAILSSATQ (272 aa)) is tRNA (mnm(5)s(2)U34)-methyltransferase. The tract at residues 278–685 (IGGGLASAHL…LRKLLKGKAL (408 aa)) is FAD-dependent cmnm(5)s(2)U34 oxidoreductase.

In the N-terminal section; belongs to the methyltransferase superfamily. tRNA (mnm(5)s(2)U34)-methyltransferase family. The protein in the C-terminal section; belongs to the DAO family. The cofactor is FAD.

It localises to the cytoplasm. The catalysed reaction is 5-aminomethyl-2-thiouridine(34) in tRNA + S-adenosyl-L-methionine = 5-methylaminomethyl-2-thiouridine(34) in tRNA + S-adenosyl-L-homocysteine + H(+). Functionally, catalyzes the last two steps in the biosynthesis of 5-methylaminomethyl-2-thiouridine (mnm(5)s(2)U) at the wobble position (U34) in tRNA. Catalyzes the FAD-dependent demodification of cmnm(5)s(2)U34 to nm(5)s(2)U34, followed by the transfer of a methyl group from S-adenosyl-L-methionine to nm(5)s(2)U34, to form mnm(5)s(2)U34. In Shewanella baltica (strain OS185), this protein is tRNA 5-methylaminomethyl-2-thiouridine biosynthesis bifunctional protein MnmC.